Here is a 161-residue protein sequence, read N- to C-terminus: uncharacterized protein (161 aa).

This is an uncharacterized protein from Methanocaldococcus jannaschii (strain ATCC 43067 / DSM 2661 / JAL-1 / JCM 10045 / NBRC 100440) (Methanococcus jannaschii).